Reading from the N-terminus, the 306-residue chain is Protein SULFUR DEFICIENCY-INDUCED 1 (306 aa).

5 TPR repeats span residues Met1–Lys22, Asp71–Asn104, Asp107–Gly140, Ser167–Ala200, and Lys202–Gly233. Residues Ser72–Gln139 adopt a coiled-coil conformation. Residues Arg238–Ala260 are a coiled coil. A TPR 6 repeat occupies Leu270–Leu304.

It belongs to the MS5 protein family.

The protein localises to the nucleus. Its function is as follows. Involved in the utilization of stored sulfate under sulfur-deficient conditions. The protein is Protein SULFUR DEFICIENCY-INDUCED 1 of Arabidopsis thaliana (Mouse-ear cress).